Here is a 460-residue protein sequence, read N- to C-terminus: Cysteine--tRNA ligase (460 aa).

Cys-28 contacts Zn(2+). The short motif at Met-30–His-40 is the 'HIGH' region element. Zn(2+)-binding residues include Cys-209, His-234, and Glu-238. The short motif at Lys-266–Ser-270 is the 'KMSKS' region element. Residue Lys-269 participates in ATP binding.

It belongs to the class-I aminoacyl-tRNA synthetase family. In terms of assembly, monomer. Zn(2+) serves as cofactor.

It localises to the cytoplasm. It carries out the reaction tRNA(Cys) + L-cysteine + ATP = L-cysteinyl-tRNA(Cys) + AMP + diphosphate. The polypeptide is Cysteine--tRNA ligase (Pseudomonas putida (strain W619)).